The sequence spans 269 residues: uncharacterized protein (269 aa).

This is an uncharacterized protein from Acanthamoeba polyphaga mimivirus (APMV).